A 357-amino-acid chain; its full sequence is MSLTRLLIKDFRNIENADLALSPGFNFLVGANGSGKTSVLEAIYTLGHGRAFRSLQPGRVIRHEQEAFVLHGRLQGEERETSIGLTKDKQGDSKVRIDGTDGHKIAELAHLMPMQLITPEGFTLLNGGPKYRRAFLDWGCFHNEAGFFTAWSNLKRLLKQRNAALRQVSRYEQLRPWDKELIPLAEQISTWRAEYSSAIAQDMADTCQQFLPEFSLTFSFQRGWEKETDYADVLERSFERDRMLTYTAHGPHKADFRIRADGAPVEDTLSRGQLKLLMCALRLAQGEFLTRESGRRCLYLIDDFASELDDARRGLLASRLKATQSQVFVSAISAEHVIDMSDENSKMFTVEKGKITD.

Residue 30–37 participates in ATP binding; it reads GANGSGKT.

The protein belongs to the RecF family.

It localises to the cytoplasm. In terms of biological role, the RecF protein is involved in DNA metabolism; it is required for DNA replication and normal SOS inducibility. RecF binds preferentially to single-stranded, linear DNA. It also seems to bind ATP. The chain is DNA replication and repair protein RecF from Salmonella agona (strain SL483).